We begin with the raw amino-acid sequence, 126 residues long: Holo-[acyl-carrier-protein] synthase (126 aa).

Mg(2+) contacts are provided by D9 and E58.

It belongs to the P-Pant transferase superfamily. AcpS family. It depends on Mg(2+) as a cofactor.

The protein resides in the cytoplasm. It catalyses the reaction apo-[ACP] + CoA = holo-[ACP] + adenosine 3',5'-bisphosphate + H(+). Transfers the 4'-phosphopantetheine moiety from coenzyme A to a Ser of acyl-carrier-protein. This Salmonella newport (strain SL254) protein is Holo-[acyl-carrier-protein] synthase.